The following is a 126-amino-acid chain: Aspartate 1-decarboxylase (126 aa).

Ser-25 serves as the catalytic Schiff-base intermediate with substrate; via pyruvic acid. Ser-25 carries the pyruvic acid (Ser) modification. Position 57 (Thr-57) interacts with substrate. The Proton donor role is filled by Tyr-58. Residue 73 to 75 (GAA) participates in substrate binding.

The protein belongs to the PanD family. As to quaternary structure, heterooctamer of four alpha and four beta subunits. Pyruvate is required as a cofactor. Post-translationally, is synthesized initially as an inactive proenzyme, which is activated by self-cleavage at a specific serine bond to produce a beta-subunit with a hydroxyl group at its C-terminus and an alpha-subunit with a pyruvoyl group at its N-terminus.

It localises to the cytoplasm. It carries out the reaction L-aspartate + H(+) = beta-alanine + CO2. The protein operates within cofactor biosynthesis; (R)-pantothenate biosynthesis; beta-alanine from L-aspartate: step 1/1. Its function is as follows. Catalyzes the pyruvoyl-dependent decarboxylation of aspartate to produce beta-alanine. The sequence is that of Aspartate 1-decarboxylase from Alkalilimnicola ehrlichii (strain ATCC BAA-1101 / DSM 17681 / MLHE-1).